The sequence spans 158 residues: Transcription elongation factor GreA (158 aa).

A coiled-coil region spans residues 45–73 (AEYHAAREQQSFIEGRIKQLESELSHAEI).

This sequence belongs to the GreA/GreB family.

Functionally, necessary for efficient RNA polymerase transcription elongation past template-encoded arresting sites. The arresting sites in DNA have the property of trapping a certain fraction of elongating RNA polymerases that pass through, resulting in locked ternary complexes. Cleavage of the nascent transcript by cleavage factors such as GreA or GreB allows the resumption of elongation from the new 3'terminus. GreA releases sequences of 2 to 3 nucleotides. The chain is Transcription elongation factor GreA from Xanthomonas axonopodis pv. citri (strain 306).